Consider the following 485-residue polypeptide: Maturase K (485 aa).

This sequence belongs to the intron maturase 2 family. MatK subfamily.

It localises to the plastid. The protein resides in the chloroplast. Functionally, usually encoded in the trnK tRNA gene intron. Probably assists in splicing its own and other chloroplast group II introns. In Malus domestica (Apple), this protein is Maturase K.